A 248-amino-acid polypeptide reads, in one-letter code: Killer cell lectin-like receptor subfamily I member 1 (248 aa).

Residues 1-80 lie on the Cytoplasmic side of the membrane; that stretch reads MLHSKRREYT…RQGPKSTVWR (80 aa). 2 consecutive short sequence motifs (ITIM motif) follow at residues 16–21 and 47–52; these read VTYTEL and LKYGEL. Residues 81–101 form a helical; Signal-anchor for type II membrane protein membrane-spanning segment; it reads VVTGMLGALCVVLMTTTGILL. Residues 102–248 lie on the Extracellular side of the membrane; sequence PKLFSSQEEQ…KKSYICEFNI (147 aa). 3 cysteine pairs are disulfide-bonded: cysteine 132–cysteine 145, cysteine 161–cysteine 244, and cysteine 223–cysteine 236. The C-type lectin domain occupies 139-245; the sequence is FGNNFYCVFK…CSAKKSYICE (107 aa). 3 N-linked (GlcNAc...) asparagine glycosylation sites follow: asparagine 197, asparagine 214, and asparagine 220.

In terms of assembly, heterodimer with KLRE1. Interacts with PTPN6. In terms of tissue distribution, expressed in natural killer (NK) cells.

The protein resides in the cell membrane. Lectin-like receptor for natural killer (NK) cells. Heterodimer formation with KLRE1 mediates inhibition of NK cell cytolytic activity. The polypeptide is Killer cell lectin-like receptor subfamily I member 1 (Mus musculus (Mouse)).